The primary structure comprises 845 residues: Protein kintoun (845 aa).

Basic and acidic residues predominate over residues 362–382 (SKEQAQMHETLRHFSREDSGV). Disordered regions lie at residues 362–420 (SKEQ…PVRH), 575–691 (QALK…SMSD), and 773–845 (AQHR…EMDD). Serine 380 bears the Phosphoserine mark. Acidic residues predominate over residues 391-400 (PVEEDPDGEL). The segment covering 584–593 (GTKEEEKENQ) has biased composition (basic and acidic residues). The span at 611 to 622 (KPGKKQRKRNKK) shows a compositional bias: basic residues. Residues 640–671 (LTKNSELQPKSTFNLPQRKQRSYSECNDSTGG) show a composition bias toward polar residues. At serine 779 the chain carries Phosphoserine. Polar residues predominate over residues 794–804 (LKQQENQSRNC).

The protein belongs to the PIH1 family. Kintoun subfamily. As to quaternary structure, interacts with Pp1alpha-96A, Pp1-87B, Pp1-13C and flw.

It localises to the cytoplasm. Functionally, required for cytoplasmic pre-assembly of axonemal dyneins, thereby playing a central role in motility in cilia and flagella. Involved in pre-assembly of dynein arm complexes in the cytoplasm before intraflagellar transport loads them for the ciliary compartment. This chain is Protein kintoun, found in Drosophila erecta (Fruit fly).